We begin with the raw amino-acid sequence, 377 residues long: E3 ubiquitin-protein ligase rififylin (377 aa).

An FYVE-type zinc finger spans residues 55–107 (TGSEPSCKACGVHFASTTRKQTCLDCKKNFCMTCSSQEGNGPRLCLLCLRFRA). Residues 115 to 134 (LMKMKVKDLRDYLSLHDIST) enclose the SAP 1 domain. Residues 176–249 (LTQPQTSTVP…SVDSEDSFVP (74 aa)) form a disordered region. Residues 190 to 212 (GLPSSPAQVTSVPLAQDQETQQA) show a composition bias toward polar residues. Acidic residues predominate over residues 235–245 (EDETQSVDSED). Phosphoserine occurs at positions 240, 243, 246, and 254. The 15-residue stretch at 264-278 (IEGLTVRQLKEILAR) folds into the SAP 2 domain. The RING-type zinc finger occupies 330 to 365 (CKICMDSPIDCVLLECGHMVTCTKCGKRMNECPICR).

In terms of assembly, interacts with CASP8 and CASP10. Interacts with RIPK1 (via protein kinase domain); involved in RIPK1 ubiquitination. Interacts with PRR5L. Interacts (via RING-type zinc finger) with p53/TP53; involved in p53/TP53 ubiquitination. Interacts (via RING-type zinc finger) with MDM2; the interaction stabilizes MDM2. Post-translationally, autoubiquitinated. In terms of processing, palmitoylated. Undergoes caspase-mediated cleavage upon death-receptor activation, by TNFSF10 for instance. May be mediated by the caspases CASP8 and CASP10 in a negative feedback loop. Ubiquitous. Detected in heart, brain, spleen, lung, liver, skeletal muscle, kidney, testis, thymus, whole embryo and embryonic stem cells.

It is found in the cytoplasm. Its subcellular location is the cytosol. The protein resides in the cell membrane. The protein localises to the recycling endosome membrane. It carries out the reaction S-ubiquitinyl-[E2 ubiquitin-conjugating enzyme]-L-cysteine + [acceptor protein]-L-lysine = [E2 ubiquitin-conjugating enzyme]-L-cysteine + N(6)-ubiquitinyl-[acceptor protein]-L-lysine.. Its pathway is protein modification; protein ubiquitination. Functionally, E3 ubiquitin-protein ligase that regulates several biological processes through the ubiquitin-mediated proteasomal degradation of various target proteins. Mediates 'Lys-48'-linked polyubiquitination of PRR5L and its subsequent proteasomal degradation thereby indirectly regulating cell migration through the mTORC2 complex. Also ubiquitinates the caspases CASP8 and CASP10, promoting their proteasomal degradation, to negatively regulate apoptosis downstream of death domain receptors. Also negatively regulates the tumor necrosis factor-mediated signaling pathway through targeting of RIPK1 to ubiquitin-mediated proteasomal degradation. Negatively regulates p53/TP53 through its direct ubiquitination and targeting to proteasomal degradation. Indirectly, may also negatively regulate p53/TP53 through ubiquitination and degradation of SFN. May also play a role in endocytic recycling. The sequence is that of E3 ubiquitin-protein ligase rififylin from Mus musculus (Mouse).